We begin with the raw amino-acid sequence, 207 residues long: Ras-related protein Rab-8B (207 aa).

Residues Ser17, Gly18, Val19, Gly20, Lys21, Thr22, Cys23, Thr35, Ser39, and Thr40 each coordinate GTP. Thr22 is a Mg(2+) binding site. 2 consecutive short sequence motifs (switch) follow at residues 31-45 (DAFN…GIDF) and 63-80 (DTAG…YYRG). Mg(2+) is bound by residues Thr40 and Asp63. Gly66 contacts GTP. Phosphothreonine is present on Thr72. Asn121, Lys122, Asp124, Ala152, and Lys153 together coordinate GTP. Ser180 carries the post-translational modification Phosphoserine. A Cysteine methyl ester modification is found at Cys204. Cys204 is lipidated: S-geranylgeranyl cysteine. Positions 205–207 (LLL) are cleaved as a propeptide — removed in mature form.

The protein belongs to the small GTPase superfamily. Rab family. As to quaternary structure, associated with actin, delta-catenin and alpha and beta tubulins. Interacts with OTOF. Interacts with PEX5R. Interacts with RAB3IP. Interacts with VIM. Interacts with CDH1. Interacts with MICALL2. Interacts with GDI1, GDI2, CHML and CHM; phosphorylation at Thr-72 disrupts these interactions. Interacts with MICAL1. It depends on Mg(2+) as a cofactor. Post-translationally, phosphorylation of Thr-72 in the switch II region by LRRK2 prevents the association of RAB regulatory proteins, including CHM, CHML and RAB GDP dissociation inhibitors GDI1 and GDI2.

The protein resides in the cell membrane. The protein localises to the cytoplasmic vesicle. It is found in the phagosome membrane. It localises to the endosome membrane. The enzyme catalyses GTP + H2O = GDP + phosphate + H(+). Regulated by guanine nucleotide exchange factors (GEFs) including RAB3IP/RABIN8 which promotes the exchange of bound GDP for free GTP. Regulated by GTPase activating proteins (GAPs) which increase the GTP hydrolysis activity. Inhibited by GDP dissociation inhibitors (GDIs). Functionally, the small GTPases Rab are key regulators of intracellular membrane trafficking, from the formation of transport vesicles to their fusion with membranes. Rabs cycle between an inactive GDP-bound form and an active GTP-bound form that is able to recruit to membranes different sets of downstream effectors directly responsible for vesicle formation, movement, tethering and fusion. RAB8B may be involved in polarized vesicular trafficking and neurotransmitter release. May participate in cell junction dynamics in Sertoli cells. May also participate in the export of a subset of neosynthesized proteins through a Rab8-Rab10-Rab11-dependent endososomal export route. This Pongo abelii (Sumatran orangutan) protein is Ras-related protein Rab-8B (RAB8B).